The following is a 179-amino-acid chain: Large ribosomal subunit protein uL16m (179 aa).

It belongs to the universal ribosomal protein uL16 family. In terms of assembly, component of the mitochondrial ribosome large subunit.

The protein resides in the mitochondrion. This Arabidopsis thaliana (Mouse-ear cress) protein is Large ribosomal subunit protein uL16m (RPL16).